A 342-amino-acid polypeptide reads, in one-letter code: Delta-aminolevulinic acid dehydratase (342 aa).

3 residues coordinate Zn(2+): Cys133, Cys135, and Cys143. Lys210 acts as the Schiff-base intermediate with substrate in catalysis. The 5-aminolevulinate site is built by Arg220 and Arg232. Ser254 is modified (phosphoserine). Lys263 functions as the Schiff-base intermediate with substrate in the catalytic mechanism. Residues Ser290 and Tyr329 each coordinate 5-aminolevulinate.

This sequence belongs to the ALAD family. As to quaternary structure, homooctamer. The cofactor is Zn(2+).

It carries out the reaction 2 5-aminolevulinate = porphobilinogen + 2 H2O + H(+). It participates in porphyrin-containing compound metabolism; protoporphyrin-IX biosynthesis; coproporphyrinogen-III from 5-aminolevulinate: step 1/4. With respect to regulation, inhibited by divalent lead ions. Its function is as follows. Catalyzes an early step in the biosynthesis of tetrapyrroles. Binds two molecules of 5-aminolevulinate per subunit, each at a distinct site, and catalyzes their condensation to form porphobilinogen. In Saccharomyces cerevisiae (strain ATCC 204508 / S288c) (Baker's yeast), this protein is Delta-aminolevulinic acid dehydratase (HEM2).